Consider the following 124-residue polypeptide: Small ribosomal subunit protein uS12 (124 aa).

Residue aspartate 89 is modified to 3-methylthioaspartic acid. The interval 105 to 124 (TGVDSRMQGRSKYGTKKPKK) is disordered.

The protein belongs to the universal ribosomal protein uS12 family. As to quaternary structure, part of the 30S ribosomal subunit. Contacts proteins S8 and S17. May interact with IF1 in the 30S initiation complex.

In terms of biological role, with S4 and S5 plays an important role in translational accuracy. Its function is as follows. Interacts with and stabilizes bases of the 16S rRNA that are involved in tRNA selection in the A site and with the mRNA backbone. Located at the interface of the 30S and 50S subunits, it traverses the body of the 30S subunit contacting proteins on the other side and probably holding the rRNA structure together. The combined cluster of proteins S8, S12 and S17 appears to hold together the shoulder and platform of the 30S subunit. In Vesicomyosocius okutanii subsp. Calyptogena okutanii (strain HA), this protein is Small ribosomal subunit protein uS12.